Consider the following 424-residue polypeptide: Serine incorporator 5 (424 aa).

Over 1-6 (MYALYF) the chain is Extracellular. The helical transmembrane segment at 7–23 (ILVVVLCCIMMSTTVAH) threads the bilayer. Residues 24 to 52 (KMKEHIPFFEDMCKGIKAGDTCEKLVGYS) lie on the Cytoplasmic side of the membrane. Residues 53–73 (AVYRVCFGMACFFFIFCLLTL) form a helical membrane-spanning segment. At 74-87 (KINNSKSCRAHIHN) the chain is on the extracellular side. Residue asparagine 76 is glycosylated (N-linked (GlcNAc...) asparagine). Residues 88–108 (GFWFFKLLLLGAMCSGAFFIP) form a helical membrane-spanning segment. Residues 109–119 (DQDTFLNAWRY) lie on the Cytoplasmic side of the membrane. The helical transmembrane segment at 120–140 (VGAVGGFLFIGIQLLLLVEFA) threads the bilayer. Over 141 to 161 (HKWNKNWTAGTASNKLWYASL) the chain is Extracellular. Asparagine 146 is a glycosylation site (N-linked (GlcNAc...) asparagine). The helical transmembrane segment at 162–182 (ALVTLIMYSIATGGLVLMAVF) threads the bilayer. The Cytoplasmic segment spans residues 183–193 (YTQKDGCMENK). Residues 194-214 (ILLGVNGGLCVLISLVAISPC) form a helical membrane-spanning segment. The Extracellular portion of the chain corresponds to 215–221 (VQNRQPH). Residues 222–242 (SGLLQSGVISCYVTYLTFSAL) traverse the membrane as a helical segment. Over 243-274 (SSKPAEVVLDEHGKNVTICVPDFGQDLYRDEN) the chain is Cytoplasmic. The chain crosses the membrane as a helical span at residues 275–295 (LVTILGTSLLIGCILYSCLTS). Over 296-348 (TTRSSSDALQGRYAAPELEIARCCFCFSPGGEDTEEQQQGKEGPRVIYDEKKG) the chain is Extracellular. The chain crosses the membrane as a helical span at residues 349 to 369 (TVYIYSYFHFVFFLASLYVMM). Residues 370 to 391 (TVTNWFNYESANIESFFSGSWS) are Cytoplasmic-facing. Residues 392–412 (IFWVKMASCWICVLLYLCTLV) form a helical membrane-spanning segment. Topologically, residues 413–424 (APLCCPTREFSV) are extracellular.

This sequence belongs to the TDE1 family.

Its subcellular location is the cell membrane. The catalysed reaction is a 1,2-diacyl-sn-glycero-3-phospho-L-serine(in) = a 1,2-diacyl-sn-glycero-3-phospho-L-serine(out). It catalyses the reaction a 1,2-diacyl-sn-glycero-3-phosphocholine(in) = a 1,2-diacyl-sn-glycero-3-phosphocholine(out). It carries out the reaction a 1,2-diacyl-sn-glycero-3-phosphoethanolamine(in) = a 1,2-diacyl-sn-glycero-3-phosphoethanolamine(out). Functionally, restriction factor required to restrict infectivity of gammaretroviruses: acts by inhibiting an early step of viral infection. Impairs the penetration of the viral particle into the cytoplasm. Non-ATP-dependent, non-specific lipid transporter for phosphatidylserine, phosphatidylcholine, and phosphatidylethanolamine. Functions as a scramblase that flips lipids in both directions across the membrane. Phospholipid scrambling results in gammaretroviral surface exposure of phosphatidylserine and loss of membrane asymmetry, which leads to loss of infectivity. Enhances the incorporation of serine into phosphatidylserine and sphingolipids. May play a role in providing serine molecules for the formation of myelin glycosphingolipids in oligodendrocytes. The sequence is that of Serine incorporator 5 (SERINC5) from Macaca fascicularis (Crab-eating macaque).